We begin with the raw amino-acid sequence, 175 residues long: MASRKAGTRSKAAATKQAQRGSSNVFSMFEQAQIQEFKEAFSCIDQNRDGIICKSDLRETYSQLGKVNVPEEELDAMLQEGKGPINFTVFLTLFGEKLNGTDPEEAILSAFRLFDPSGKGVVNKDQFKQLLLTQADKFSPAEVEQMFALTPMDLAGNIDYKSLCYIITHGDEKEE.

An N-acetylalanine modification is found at Ala-2. A phosphoserine mark is found at Ser-22 and Ser-23. EF-hand domains follow at residues 32 to 67, 102 to 137, and 138 to 173; these read AQIQEFKEAFSCIDQNRDGIICKSDLRETYSQLGKV, DPEEAILSAFRLFDPSGKGVVNKDQFKQLLLTQADK, and FSPAEVEQMFALTPMDLAGNIDYKSLCYIITHGDEK. Residues Asp-45, Asn-47, Asp-49, and Asp-56 each coordinate Ca(2+).

As to quaternary structure, myosin is a hexamer of 2 heavy chains and 4 light chains.

In Sus scrofa (Pig), this protein is Myosin regulatory light chain 2, atrial isoform (MYL7).